We begin with the raw amino-acid sequence, 485 residues long: Cholesterol 16,22-dihydroxylase CYP90G4 (485 aa).

Residues 4–24 (VVILFFLFPTLLVLVVAVLGL) traverse the membrane as a helical segment. A heme-binding site is contributed by Cys432.

The protein belongs to the cytochrome P450 family. As to expression, mainly expressed in leaves and, at low levels, in roots and stems.

The protein localises to the membrane. It carries out the reaction cholesterol + 2 reduced [NADPH--hemoprotein reductase] + 2 O2 = (16S,22S)-dihydroxycholesterol + 2 oxidized [NADPH--hemoprotein reductase] + 2 H2O + 2 H(+). The protein operates within steroid metabolism; cholesterol metabolism. Functionally, involved in the biosynthesis of spiroketal steroid and saponin natural products from cholesterol such as diosgenin and analogs (e.g. furostanol and spirostanol), plant defense compounds used as main precursors for the industrial production of steroid hormones. During the 5,6-spiroketalization of cholesterol, catalyzes the hydroxylation of cholesterol to form 16S,22S-dihydroxycholesterol and, possibly, the subsequent conversion of 16S,22S-dihydroxycholesterol into 16-oxo-22-hydroxy-cholesterol and 16-hydroxy-22-oxo-cholesterol. 16-hydroxy-22-oxo-cholesterol submit a spontaneous reaction leading to the production of furostanol-type steroid diastereomers, precursors of diosgenin. In Paris polyphylla (Daiswa polyphylla), this protein is Cholesterol 16,22-dihydroxylase CYP90G4.